Consider the following 391-residue polypeptide: 1-deoxy-D-xylulose 5-phosphate reductoisomerase (391 aa).

NADPH is bound by residues threonine 17, glycine 18, serine 19, isoleucine 20, asparagine 47, and asparagine 130. Position 131 (lysine 131) interacts with 1-deoxy-D-xylulose 5-phosphate. An NADPH-binding site is contributed by glutamate 132. Position 156 (aspartate 156) interacts with Mn(2+). Serine 157, glutamate 158, serine 182, and histidine 205 together coordinate 1-deoxy-D-xylulose 5-phosphate. Mn(2+) is bound at residue glutamate 158. Glycine 211 contacts NADPH. 1-deoxy-D-xylulose 5-phosphate-binding residues include serine 218, asparagine 223, lysine 224, and glutamate 227. Glutamate 227 provides a ligand contact to Mn(2+).

This sequence belongs to the DXR family. The cofactor is Mg(2+). Mn(2+) serves as cofactor.

The enzyme catalyses 2-C-methyl-D-erythritol 4-phosphate + NADP(+) = 1-deoxy-D-xylulose 5-phosphate + NADPH + H(+). The protein operates within isoprenoid biosynthesis; isopentenyl diphosphate biosynthesis via DXP pathway; isopentenyl diphosphate from 1-deoxy-D-xylulose 5-phosphate: step 1/6. Its function is as follows. Catalyzes the NADPH-dependent rearrangement and reduction of 1-deoxy-D-xylulose-5-phosphate (DXP) to 2-C-methyl-D-erythritol 4-phosphate (MEP). The protein is 1-deoxy-D-xylulose 5-phosphate reductoisomerase of Sinorhizobium medicae (strain WSM419) (Ensifer medicae).